The chain runs to 351 residues: UDP-N-acetylglucosamine--N-acetylmuramyl-(pentapeptide) pyrophosphoryl-undecaprenol N-acetylglucosamine transferase (351 aa).

UDP-N-acetyl-alpha-D-glucosamine-binding positions include 12 to 14 (TGG), Asn124, Arg160, Ser188, Ile239, 258 to 263 (ALTVCE), and Gln283.

It belongs to the glycosyltransferase 28 family. MurG subfamily.

It is found in the cell inner membrane. It catalyses the reaction di-trans,octa-cis-undecaprenyl diphospho-N-acetyl-alpha-D-muramoyl-L-alanyl-D-glutamyl-meso-2,6-diaminopimeloyl-D-alanyl-D-alanine + UDP-N-acetyl-alpha-D-glucosamine = di-trans,octa-cis-undecaprenyl diphospho-[N-acetyl-alpha-D-glucosaminyl-(1-&gt;4)]-N-acetyl-alpha-D-muramoyl-L-alanyl-D-glutamyl-meso-2,6-diaminopimeloyl-D-alanyl-D-alanine + UDP + H(+). It functions in the pathway cell wall biogenesis; peptidoglycan biosynthesis. Cell wall formation. Catalyzes the transfer of a GlcNAc subunit on undecaprenyl-pyrophosphoryl-MurNAc-pentapeptide (lipid intermediate I) to form undecaprenyl-pyrophosphoryl-MurNAc-(pentapeptide)GlcNAc (lipid intermediate II). The sequence is that of UDP-N-acetylglucosamine--N-acetylmuramyl-(pentapeptide) pyrophosphoryl-undecaprenol N-acetylglucosamine transferase from Actinobacillus pleuropneumoniae serotype 5b (strain L20).